A 245-amino-acid chain; its full sequence is 8-amino-3,8-dideoxy-manno-octulosonate cytidylyltransferase (245 aa).

It belongs to the KdsB family.

It localises to the cytoplasm. It carries out the reaction 8-amino-3,8-dideoxy-alpha-D-manno-octulosonate + CTP = CMP-8-amino-3,8-dideoxy-alpha-D-manno-oct-2-ulosonate + diphosphate. It participates in bacterial outer membrane biogenesis; lipopolysaccharide biosynthesis. Its function is as follows. Activates KDO8N (a required 8-carbon sugar) for incorporation into bacterial lipopolysaccharide in the Shewanella genus. This chain is 8-amino-3,8-dideoxy-manno-octulosonate cytidylyltransferase, found in Shewanella sp. (strain MR-7).